The chain runs to 555 residues: Formate--tetrahydrofolate ligase (555 aa).

An ATP-binding site is contributed by 64-71 (TKAGIGKT).

It belongs to the formate--tetrahydrofolate ligase family.

It catalyses the reaction (6S)-5,6,7,8-tetrahydrofolate + formate + ATP = (6R)-10-formyltetrahydrofolate + ADP + phosphate. Its pathway is one-carbon metabolism; tetrahydrofolate interconversion. The sequence is that of Formate--tetrahydrofolate ligase from Bacteroides thetaiotaomicron (strain ATCC 29148 / DSM 2079 / JCM 5827 / CCUG 10774 / NCTC 10582 / VPI-5482 / E50).